A 157-amino-acid polypeptide reads, in one-letter code: Short-type peptidyl-prolyl cis-trans isomerase (157 aa).

Residues 1–95 form the PPIase FKBP-type domain; that stretch reads MINLIKKGDY…RDERLIQEIP (95 aa). An IF region spans residues 86 to 137; that stretch reads RDERLIQEIPKEMFADADFEPQEGMLILASGIPAKIIKVTDDTVTLDFNHEL.

It belongs to the FKBP-type PPIase family.

Its subcellular location is the cytoplasm. The enzyme catalyses [protein]-peptidylproline (omega=180) = [protein]-peptidylproline (omega=0). In terms of biological role, catalyzes the cis-trans isomerization of peptidyl prolyl bonds and accelerates protein folding. Also exhibits chaperone-like activity. The polypeptide is Short-type peptidyl-prolyl cis-trans isomerase (Methanocaldococcus jannaschii (strain ATCC 43067 / DSM 2661 / JAL-1 / JCM 10045 / NBRC 100440) (Methanococcus jannaschii)).